A 512-amino-acid chain; its full sequence is 2-isopropylmalate synthase (512 aa).

The Pyruvate carboxyltransferase domain occupies 5-267 (LYIFDTTLRD…DSRVDATQIV (263 aa)). Mn(2+) contacts are provided by Asp-14, His-202, His-204, and Asn-238. The tract at residues 393-512 (KLVSLKVVSE…EEKMNAQAAA (120 aa)) is regulatory domain.

The protein belongs to the alpha-IPM synthase/homocitrate synthase family. LeuA type 1 subfamily. As to quaternary structure, homodimer. Mn(2+) is required as a cofactor.

It is found in the cytoplasm. The enzyme catalyses 3-methyl-2-oxobutanoate + acetyl-CoA + H2O = (2S)-2-isopropylmalate + CoA + H(+). It functions in the pathway amino-acid biosynthesis; L-leucine biosynthesis; L-leucine from 3-methyl-2-oxobutanoate: step 1/4. Its function is as follows. Catalyzes the condensation of the acetyl group of acetyl-CoA with 3-methyl-2-oxobutanoate (2-ketoisovalerate) to form 3-carboxy-3-hydroxy-4-methylpentanoate (2-isopropylmalate). The polypeptide is 2-isopropylmalate synthase (Chromobacterium violaceum (strain ATCC 12472 / DSM 30191 / JCM 1249 / CCUG 213 / NBRC 12614 / NCIMB 9131 / NCTC 9757 / MK)).